We begin with the raw amino-acid sequence, 395 residues long: Fractalkine (395 aa).

The N-terminal stretch at 1-24 (MAPSPLAWLLRLAAFFHLCTLLPG) is a signal peptide. The chemokine and involved in interaction with ITGAV:ITGB3 and ITGA4:ITGB1 stretch occupies residues 25–100 (QHLGMTKCEI…HQAAALTKNG (76 aa)). The Extracellular portion of the chain corresponds to 25–336 (QHLGMTKCEI…TPVPDTQAAT (312 aa)). Cystine bridges form between Cys32/Cys58 and Cys36/Cys74. Positions 101–336 (GKFEKRVDNV…TPVPDTQAAT (236 aa)) are mucin-like stalk. 2 stretches are compositionally biased toward polar residues: residues 148–172 (ARGTMGTSQEPPAAVTGSSLSTSEA) and 201–210 (AVYQSGSSSW). 2 disordered regions span residues 148 to 180 (ARGTMGTSQEPPAAVTGSSLSTSEAQDAGLTAK) and 201 to 305 (AVYQ…SGSQ). A compositionally biased stretch (low complexity) spans 218-236 (SPSTTAPSPQVSTTSPSTP). A helical transmembrane segment spans residues 337–357 (RRQAVGLLAFLGLLFCLGVAM). The Cytoplasmic segment spans residues 358–395 (FAYQSLQGCPRKMAGEMVEGLRYVPRSCGSNSYVLVPV).

Belongs to the intercrine delta family. Monomer. Forms a ternary complex with CX3CR1 and ITGAV:ITGB3 or ITGA4:ITGB1. A soluble short 80 kDa form may be released by proteolytic cleavage from the long membrane-anchored form. As to expression, highest levels in brain. Lower levels in kidney, heart and lung. Also found in skeletal muscle and testis. Highly expressed in lesional smooth muscle cells, but not macrophages. Low levels of ABCD-3 mRNA were also found in anti-CD40-stimulated splenic B-cells, but not in resting B-cells. Also expressed in dendritic cells.

It is found in the cell membrane. Its subcellular location is the secreted. Chemokine that acts as a ligand for both CX3CR1 and integrins ITGAV:ITGB3 and ITGA4:ITGB1. The CX3CR1-CX3CL1 signaling exerts distinct functions in different tissue compartments, such as immune response, inflammation, cell adhesion and chemotaxis. Regulates leukocyte adhesion and migration processes at the endothelium. Can activate integrins in both a CX3CR1-dependent and CX3CR1-independent manner. In the presence of CX3CR1, activates integrins by binding to the classical ligand-binding site (site 1) in integrins. In the absence of CX3CR1, binds to a second site (site 2) in integrins which is distinct from site 1 and enhances the binding of other integrin ligands to site 1. In terms of biological role, the soluble form is chemotactic for T-cells and monocytes, but not for neutrophils. Its function is as follows. The membrane-bound form promotes adhesion of those leukocytes to endothelial cells. The protein is Fractalkine of Mus musculus (Mouse).